Here is a 209-residue protein sequence, read N- to C-terminus: MTKGILGRKVGMTQVFTENGELIPVTVIEAAQNVVLQKKTVETDGYEAVQIGFEDKRAKLSNKPEQGHVAKADTTPKRFIREFRDVNLDEYEIGAEVKVDVFAEGDIIDATGVSKGKGFQGVIKRHGQSRGPMAHGSRYHRRPGSMGPVAPNRVFKNKLLPGRMGGEQITIQNLEIVKVDVEKNVLLVKGNVPGAKKALVQIKTATKAK.

The segment at 126–148 (HGQSRGPMAHGSRYHRRPGSMGP) is disordered.

The protein belongs to the universal ribosomal protein uL3 family. As to quaternary structure, part of the 50S ribosomal subunit. Forms a cluster with proteins L14 and L19.

Functionally, one of the primary rRNA binding proteins, it binds directly near the 3'-end of the 23S rRNA, where it nucleates assembly of the 50S subunit. The chain is Large ribosomal subunit protein uL3 from Listeria innocua serovar 6a (strain ATCC BAA-680 / CLIP 11262).